The chain runs to 140 residues: Arsenate reductase (140 aa).

Cys11 serves as the catalytic Nucleophile; cysteine thioarsenate intermediate.

It belongs to the ArsC family.

The catalysed reaction is [glutaredoxin]-dithiol + arsenate + glutathione + H(+) = glutathionyl-S-S-[glutaredoxin] + arsenite + H2O. Functionally, involved in resistance to arsenate. Catalyzes the reduction of arsenate [As(V)] to arsenite [As(III)]. The resulting arsenite is then extruded from the cell via the aquaglyceroporin AqpS. Does not display antimonate reductase activity. The chain is Arsenate reductase from Rhizobium meliloti (strain 1021) (Ensifer meliloti).